Consider the following 42-residue polypeptide: uncharacterized protein (42 aa).

This is an uncharacterized protein from Treponema pallidum (strain Nichols).